The primary structure comprises 66 residues: Large ribosomal subunit protein bL31 (66 aa).

Zn(2+) is bound by residues cysteine 16, cysteine 18, cysteine 36, and cysteine 39.

Belongs to the bacterial ribosomal protein bL31 family. Type A subfamily. Part of the 50S ribosomal subunit. Zn(2+) is required as a cofactor.

Its function is as follows. Binds the 23S rRNA. In Clostridioides difficile (strain 630) (Peptoclostridium difficile), this protein is Large ribosomal subunit protein bL31.